The sequence spans 146 residues: Hemoglobin subunit delta (146 aa).

In terms of domain architecture, Globin spans His-2–His-146. Residues His-63 and His-92 each contribute to the heme b site.

It belongs to the globin family. As to quaternary structure, heterotetramer of two delta chains and two alpha chains. Red blood cells.

The protein is Hemoglobin subunit delta (HBD) of Ateles fusciceps (Brown-headed spider monkey).